A 204-amino-acid polypeptide reads, in one-letter code: uncharacterized protein (204 aa).

Component of the acid-soluble organic matrix of the aragonitic skeleton (at protein level).

Its subcellular location is the secreted. This is an uncharacterized protein from Acropora millepora (Staghorn coral).